We begin with the raw amino-acid sequence, 266 residues long: tRNA pseudouridine synthase A (266 aa).

D55 serves as the catalytic Nucleophile. Residue Y110 coordinates substrate.

This sequence belongs to the tRNA pseudouridine synthase TruA family.

It catalyses the reaction uridine(38/39/40) in tRNA = pseudouridine(38/39/40) in tRNA. Formation of pseudouridine at positions 38, 39 and 40 in the anticodon stem and loop of transfer RNAs. This chain is tRNA pseudouridine synthase A, found in Thermococcus sibiricus (strain DSM 12597 / MM 739).